Consider the following 317-residue polypeptide: MAPPPAVVAHPLSSQATGLDMVHEFNQKLTKSDEHTWESFKFAPIRESTVSRAMTRRYFEDLDKYAESDVVIIGAGSCGLSAAYVLAKSRPDLKIAIVEAGVAPGGGAWLGGQLFSAMVMRKPAEQFLEEIGVPYEDEGDYVVVKHAALFTSTLMSQVLKFPNVKLFNATAVEDLITRKDAQGNLRIAGVVTNWTLVSMHHDDQSCMDPNTINAPIIISTTGHDGPFGAFSVKRLVSMNAIEKLGGMRGLDMGLAEDAIVKRTREIVPGLVVGGMELSEVDGANRMGPTFGAMALSGVKAAETVLEVFDTRKKQNQE.

Substrate is bound by residues Cys-78, 99-100 (EA), Gly-107, and Val-172. A 2,3-didehydroalanine (Cys) modification is found at Cys-206. Substrate is bound by residues Asp-208, His-223, Met-275, and 285–287 (RMG).

Belongs to the THI4 family. As to quaternary structure, homooctamer. Fe cation is required as a cofactor. In terms of processing, during the catalytic reaction, a sulfide is transferred from Cys-206 to a reaction intermediate, generating a dehydroalanine residue.

The protein resides in the cytoplasm. Its subcellular location is the nucleus. The enzyme catalyses [ADP-thiazole synthase]-L-cysteine + glycine + NAD(+) = [ADP-thiazole synthase]-dehydroalanine + ADP-5-ethyl-4-methylthiazole-2-carboxylate + nicotinamide + 3 H2O + 2 H(+). Its function is as follows. Involved in biosynthesis of the thiamine precursor thiazole. Catalyzes the conversion of NAD and glycine to adenosine diphosphate 5-(2-hydroxyethyl)-4-methylthiazole-2-carboxylic acid (ADT), an adenylated thiazole intermediate. The reaction includes an iron-dependent sulfide transfer from a conserved cysteine residue of the protein to a thiazole intermediate. The enzyme can only undergo a single turnover, which suggests it is a suicide enzyme. May have additional roles in adaptation to various stress conditions and in DNA damage tolerance. The polypeptide is Thiamine thiazole synthase (Yarrowia lipolytica (strain CLIB 122 / E 150) (Yeast)).